The following is a 420-amino-acid chain: Multifunctional CCA protein (420 aa).

The ATP site is built by Gly8 and Arg11. CTP contacts are provided by Gly8 and Arg11. Residues Asp21 and Asp23 each coordinate Mg(2+). 3 residues coordinate ATP: Arg91, Arg137, and Arg140. The CTP site is built by Arg91, Arg137, and Arg140. Residues 228 to 334 (TFVHTMLVLQ…LKLFNRLDVW (107 aa)) enclose the HD domain.

This sequence belongs to the tRNA nucleotidyltransferase/poly(A) polymerase family. Bacterial CCA-adding enzyme type 1 subfamily. As to quaternary structure, monomer. Can also form homodimers and oligomers. The cofactor is Mg(2+). It depends on Ni(2+) as a cofactor.

The enzyme catalyses a tRNA precursor + 2 CTP + ATP = a tRNA with a 3' CCA end + 3 diphosphate. It catalyses the reaction a tRNA with a 3' CCA end + 2 CTP + ATP = a tRNA with a 3' CCACCA end + 3 diphosphate. Functionally, catalyzes the addition and repair of the essential 3'-terminal CCA sequence in tRNAs without using a nucleic acid template. Adds these three nucleotides in the order of C, C, and A to the tRNA nucleotide-73, using CTP and ATP as substrates and producing inorganic pyrophosphate. tRNA 3'-terminal CCA addition is required both for tRNA processing and repair. Also involved in tRNA surveillance by mediating tandem CCA addition to generate a CCACCA at the 3' terminus of unstable tRNAs. While stable tRNAs receive only 3'-terminal CCA, unstable tRNAs are marked with CCACCA and rapidly degraded. The chain is Multifunctional CCA protein from Pasteurella multocida (strain Pm70).